Consider the following 197-residue polypeptide: Imidazoleglycerol-phosphate dehydratase (197 aa).

It belongs to the imidazoleglycerol-phosphate dehydratase family.

The protein localises to the cytoplasm. The catalysed reaction is D-erythro-1-(imidazol-4-yl)glycerol 3-phosphate = 3-(imidazol-4-yl)-2-oxopropyl phosphate + H2O. Its pathway is amino-acid biosynthesis; L-histidine biosynthesis; L-histidine from 5-phospho-alpha-D-ribose 1-diphosphate: step 6/9. In Rhodopseudomonas palustris (strain BisB5), this protein is Imidazoleglycerol-phosphate dehydratase.